Consider the following 390-residue polypeptide: MPSKSLSNLSVTTGANESGSVPEGWERDFLPASDGTTTELVIRCVIPSLYLLIITVGLLGNIMLVKIFITNSAMRSVPNIFISNLAAGDLLLLLTCVPVDASRYFFDEWMFGKVGCKLIPVIQLTSVGVSVFTLTALSADRYRAIVNPMDMQTSGALLRTCVKAMGIWVVSVLLAVPEAVFSEVARISSLDNSSFTACIPYPQTDELHPKIHSVLIFLVYFLIPLAIISIYYYHIAKTLIKSAHNLPGEYNEHTKKQMETRKRLAKIVLVFVGCFIFCWFPNHILYMYRSFNYNEIDPSLGHMIVTLVARVLSFGNSCVNPFALYLLSESFRRHFNSQLCCGRKSYQERGTSYLLSSSAVRMTSLKSNAKNMVTNSVLLNGHSMKQEMAL.

The span at 1–19 shows a compositional bias: polar residues; sequence MPSKSLSNLSVTTGANESG. Residues 1 to 22 are disordered; the sequence is MPSKSLSNLSVTTGANESGSVP. Topologically, residues 1–41 are extracellular; sequence MPSKSLSNLSVTTGANESGSVPEGWERDFLPASDGTTTELV. N-linked (GlcNAc...) asparagine glycans are attached at residues Asn-8 and Asn-16. Residues 42-65 form a helical membrane-spanning segment; that stretch reads IRCVIPSLYLLIITVGLLGNIMLV. Topologically, residues 66 to 79 are cytoplasmic; it reads KIFITNSAMRSVPN. The helical transmembrane segment at 80–99 threads the bilayer; sequence IFISNLAAGDLLLLLTCVPV. Residues 100–117 lie on the Extracellular side of the membrane; that stretch reads DASRYFFDEWMFGKVGCK. Cys-116 and Cys-198 are oxidised to a cystine. Residues 118 to 139 traverse the membrane as a helical segment; it reads LIPVIQLTSVGVSVFTLTALSA. The Cytoplasmic portion of the chain corresponds to 140-156; that stretch reads DRYRAIVNPMDMQTSGA. A helical transmembrane segment spans residues 157–177; that stretch reads LLRTCVKAMGIWVVSVLLAVP. Residues 178–211 are Extracellular-facing; the sequence is EAVFSEVARISSLDNSSFTACIPYPQTDELHPKI. N-linked (GlcNAc...) asparagine glycosylation is present at Asn-192. The helical transmembrane segment at 212–235 threads the bilayer; the sequence is HSVLIFLVYFLIPLAIISIYYYHI. Residues 236–266 lie on the Cytoplasmic side of the membrane; that stretch reads AKTLIKSAHNLPGEYNEHTKKQMETRKRLAK. A helical transmembrane segment spans residues 267-287; that stretch reads IVLVFVGCFIFCWFPNHILYM. Topologically, residues 288–299 are extracellular; the sequence is YRSFNYNEIDPS. A helical transmembrane segment spans residues 300-327; it reads LGHMIVTLVARVLSFGNSCVNPFALYLL. Topologically, residues 328-390 are cytoplasmic; the sequence is SESFRRHFNS…GHSMKQEMAL (63 aa). Cys-341 is lipidated: S-palmitoyl cysteine. Position 352 is a phosphoserine (Ser-352).

It belongs to the G-protein coupled receptor 1 family. As to expression, expressed in epididymis (at protein level).

It localises to the cell membrane. Receptor for neuromedin-B. Contributes to the maintenance of basal sigh rate through signaling in the pre-Botzinger complex, a cluster of several thousand neurons in the ventrolateral medulla responsible for inspiration during respiratory activity. Contributes to the induction of sneezing following exposure to chemical irritants or allergens which causes release of NMB by nasal sensory neurons and activation of NMBR-expressing neurons in the sneeze-evoking region of the brainstem. These in turn activate neurons of the caudal ventral respiratory group, giving rise to the sneezing response. Contributes to induction of acute itch, possibly through its activation on dorsal root ganglion neurons by the NMB peptide. Plays a role in the innate immune response to influenza A virus infection by enhancing interferon alpha expression and reducing expression of IL6. Plays a role in CSF1-induced proliferation of osteoclast precursors by contributing to the positive regulation of the expression of the CSF1 receptor CSF1R. The chain is Neuromedin-B receptor (NMBR) from Homo sapiens (Human).